The primary structure comprises 346 residues: Sulfate/thiosulfate import ATP-binding protein CysA (346 aa).

Residues 3–237 form the ABC transporter domain; the sequence is VRVANVRKEF…PNSPFVYGFI (235 aa). 35–42 lines the ATP pocket; it reads GPSGSGKT.

The protein belongs to the ABC transporter superfamily. Sulfate/tungstate importer (TC 3.A.1.6) family. In terms of assembly, the complex is composed of two ATP-binding proteins (CysA), two transmembrane proteins (CysT and CysW) and a solute-binding protein (CysP).

Its subcellular location is the cell inner membrane. The enzyme catalyses sulfate(out) + ATP + H2O = sulfate(in) + ADP + phosphate + H(+). The catalysed reaction is thiosulfate(out) + ATP + H2O = thiosulfate(in) + ADP + phosphate + H(+). Functionally, part of the ABC transporter complex CysAWTP involved in sulfate/thiosulfate import. Responsible for energy coupling to the transport system. The chain is Sulfate/thiosulfate import ATP-binding protein CysA from Mesorhizobium japonicum (strain LMG 29417 / CECT 9101 / MAFF 303099) (Mesorhizobium loti (strain MAFF 303099)).